Consider the following 43-residue polypeptide: Avenin-F (43 aa).

Residues 1–23 are disordered; sequence TTTVQYDPSEQYQPYPEQQEPFV. A compositionally biased stretch (low complexity) spans 10 to 23; the sequence is EQYQPYPEQQEPFV. Residues 21 to 26 form repeat 1; the sequence is PFVQQQ. The tract at residues 21 to 40 is 3 X 6 aa tandem repeats of P-F-V-Q-Q-Q; that stretch reads PFVQQQPPFVQQQQPFVQQQ. Residues 27 to 34 form a 2; approximate repeat; it reads PPFVQQQQ. Copy 3 of the repeat occupies 35–40; sequence PFVQQQ.

The protein belongs to the gliadin/glutenin family. In terms of assembly, monomer.

The protein resides in the vacuole. It localises to the aleurone grain. Functionally, seed storage protein. Serves as a source of nitrogen, carbon, and sulfur for the young developing seedling. The protein is Avenin-F of Avena sativa (Oat).